The chain runs to 822 residues: Ribonucleoside-diphosphate reductase large subunit (822 aa).

Substrate contacts are provided by residues T249, 264–265 (SC), G295, 470–474 (NLCTE), and 651–655 (PTAAS). Residues C265 and C487 are joined by a disulfide bond. Residue N470 is the Proton acceptor of the active site. The active-site Cysteine radical intermediate is C472. The active-site Proton acceptor is the E474.

The protein belongs to the ribonucleoside diphosphate reductase large chain family. As to quaternary structure, heterotetramer composed of a homodimer of the large subunit (R1) and a homodimer of the small subunit (R2). Larger multisubunit protein complex are also active, composed of (R1)n(R2)n.

The catalysed reaction is a 2'-deoxyribonucleoside 5'-diphosphate + [thioredoxin]-disulfide + H2O = a ribonucleoside 5'-diphosphate + [thioredoxin]-dithiol. In terms of biological role, ribonucleoside-diphosphate reductase holoenzyme provides the precursors necessary for viral DNA synthesis. Allows virus growth in non-dividing cells, as well as reactivation from latency in infected hosts. Catalyzes the biosynthesis of deoxyribonucleotides from the corresponding ribonucleotides. This Gallus gallus (Chicken) protein is Ribonucleoside-diphosphate reductase large subunit.